The sequence spans 141 residues: Large ribosomal subunit protein uL11 (141 aa).

Belongs to the universal ribosomal protein uL11 family. Part of the ribosomal stalk of the 50S ribosomal subunit. Interacts with L10 and the large rRNA to form the base of the stalk. L10 forms an elongated spine to which L12 dimers bind in a sequential fashion forming a multimeric L10(L12)X complex. In terms of processing, one or more lysine residues are methylated.

Functionally, forms part of the ribosomal stalk which helps the ribosome interact with GTP-bound translation factors. The chain is Large ribosomal subunit protein uL11 from Lactococcus lactis subsp. cremoris (strain MG1363).